A 549-amino-acid polypeptide reads, in one-letter code: MERKEIKDSAYLFLGSIGPAFENITLGIGDKLALKAIAGAYRVSEEEVKKRYSRTGDLGDVAFELNQGEEKSLAIDEVFGSLKEIKEASGKGSQEEKTGLLSSILQRASPKEGKYIVRIVLGKLRLGFGDQFLLEAFSIAFTGDKKYVVKIKESYSVCTDIGELAESLAEQGPKALGHFSIKLGRPVRSMLAQRVKTFEELEERIPGKKAAEEKYDGERVQIHKNGEEIKAFSRRLEDITAQYPDVIEAVRKGILAKKIVLDGEIIAYVEGGKANDSTGEFYSFQRLMKRRRKYEVQKYTEICPVAVFFFDILYLEGNSLLKKPYPERRAILEEHVKESEILHLARRIVTDNLEEIEDFFNEALEKRLEGIIIKSMGRNSAYEAGKRSWFWLKWKEEYASGMRETFDLAIIGKYYGRGKRKGSFGALLCAILNGEEQRFETFTKVGTGFTEADAKEIDSLLSEHIISEVPKNVLIKSRMLPDIFVEPSLVIEVLGSEITESPSHTAGQGEGDTGLALRFPRFLRIRHDKGPYDITTLTEVRNLKEGKSI.

Glu-212 is an ATP binding site. Lys-214 serves as the catalytic N6-AMP-lysine intermediate. ATP-binding residues include Arg-219, Arg-234, Glu-264, Phe-310, Arg-387, and Lys-393.

This sequence belongs to the ATP-dependent DNA ligase family. Requires Mg(2+) as cofactor.

It catalyses the reaction ATP + (deoxyribonucleotide)n-3'-hydroxyl + 5'-phospho-(deoxyribonucleotide)m = (deoxyribonucleotide)n+m + AMP + diphosphate.. Its function is as follows. DNA ligase that seals nicks in double-stranded DNA during DNA replication, DNA recombination and DNA repair. In Methanosarcina barkeri (strain Fusaro / DSM 804), this protein is DNA ligase 1.